We begin with the raw amino-acid sequence, 531 residues long: Basal body-orientation factor 1 (531 aa).

Over residues 1–19 (MPKLKVKAGKGKKGKRKKA) the composition is skewed to basic residues. A disordered region spans residues 1-32 (MPKLKVKAGKGKKGKRKKAGKNEHRLDKESEV). Residues 20–32 (GKNEHRLDKESEV) are compositionally biased toward basic and acidic residues. 2 coiled-coil regions span residues 26 to 213 (LDKE…AEKA) and 274 to 365 (VQEK…VESF). The tract at residues 465–505 (QSRKSPGLKPSPPADVSSIKEKEINTSNLEEKPEESSSTFI) is disordered. Over residues 482 to 499 (SIKEKEINTSNLEEKPEE) the composition is skewed to basic and acidic residues.

It belongs to the BBOF1 family. In terms of tissue distribution, multiciliated cells.

Its subcellular location is the cytoplasm. It localises to the cytoskeleton. It is found in the cilium basal body. Its function is as follows. Basal body protein required in multiciliate cells to align and maintain cilia orientation in response to flow. May act by mediating a maturation step that stabilizes and aligns cilia orientation. Not required to respond to planar cell polarity (PCP) or flow-based orientation cues. The chain is Basal body-orientation factor 1 (ccdc176) from Xenopus laevis (African clawed frog).